The primary structure comprises 460 residues: Elongation factor 1-alpha-A (460 aa).

G2 is modified (n,N,N-trimethylglycine). Position 3 is an N6,N6-dimethyllysine; alternate (K3). K3 carries the post-translational modification N6-methyllysine; alternate. Residues 5-240 (KGHINVVVIG…DSIEPPARPT (236 aa)) form the tr-type G domain. The tract at residues 14–21 (GHVDSGKS) is G1. Residue 14-21 (GHVDSGKS) participates in GTP binding. Position 30 is an N6-methyllysine (K30). The segment at 70–74 (GITID) is G2. An N6,N6,N6-trimethyllysine modification is found at K79. The segment at 91–94 (DAPG) is G3. GTP contacts are provided by residues 91-95 (DAPGH) and 153-156 (NKMD). Residues 153-156 (NKMD) form a G4 region. Residues 192 to 194 (SGF) form a G5 region. K316 carries the N6,N6-dimethyllysine; alternate modification. K316 bears the N6-methyllysine; alternate mark. K390 is subject to N6-methyllysine.

It belongs to the TRAFAC class translation factor GTPase superfamily. Classic translation factor GTPase family. EF-Tu/EF-1A subfamily.

It localises to the cytoplasm. Its function is as follows. This protein promotes the GTP-dependent binding of aminoacyl-tRNA to the A-site of ribosomes during protein biosynthesis. This Schizosaccharomyces pombe (strain 972 / ATCC 24843) (Fission yeast) protein is Elongation factor 1-alpha-A (tef101).